The primary structure comprises 136 residues: Large ribosomal subunit protein uL16 (136 aa).

The protein belongs to the universal ribosomal protein uL16 family. As to quaternary structure, part of the 50S ribosomal subunit.

Its function is as follows. Binds 23S rRNA and is also seen to make contacts with the A and possibly P site tRNAs. In Elusimicrobium minutum (strain Pei191), this protein is Large ribosomal subunit protein uL16.